The primary structure comprises 403 residues: RILP-like protein 1 (403 aa).

The residue at position 7 (S7) is a Phosphoserine. In terms of domain architecture, RH1 spans 10–97 (AAESALEKNV…RLERMDRIEK (88 aa)). C47 bears the S-nitrosocysteine mark. Positions 76–265 (ELDELRLELD…GELNQNGEEE (190 aa)) form a coiled coil. The RH2 domain maps to 291–356 (RPRFTLQELR…PQPESGIKRL (66 aa)). The segment at 329 to 348 (EEENQIPQPPPIAHPRMSPQ) is disordered.

It belongs to the RILPL family. Interacts (when S-nitrosylated) with GAPDH. Interacts with RAB8A; interaction is dependent on the phosphorylation of 'Thr-72' of RAB8A. Interacts with RAB10 and RAB12; the interaction is dependent on the phosphorylation of 'Thr-73' of RAB10, and 'Ser-105' of RAB12. Post-translationally, S-nitrosylation is required for the interaction with GAPDH.

It is found in the cytoplasm. The protein resides in the cytosol. The protein localises to the cytoskeleton. Its subcellular location is the microtubule organizing center. It localises to the centrosome. It is found in the centriole. The protein resides in the cilium basal body. In terms of biological role, plays a role in the regulation of cell shape and polarity. Plays a role in cellular protein transport, including protein transport away from primary cilia. Neuroprotective protein, which acts by sequestring GAPDH in the cytosol and prevent the apoptotic function of GAPDH in the nucleus. Competes with SIAH1 for binding GAPDH. Does not regulate lysosomal morphology and distribution. Binds to RAB10 following LRRK2-mediated RAB10 phosphorylation which leads to inhibition of ciliogenesis. The chain is RILP-like protein 1 (RILPL1) from Bos taurus (Bovine).